The sequence spans 339 residues: MHLSAPHFWWKNKSFLRFLLAPISWGYAYFSRRRMARHPPIVDLPVLCIGNFTCGGAGKTPVVIAFAKVAKELGFVPGVVSRGYGGRVKGIHLVNEEHDNAYDVGDEALLLARHAFVAISVDRYAAAQRLKKEGCNLILMDDGFQSRRLYMDYALLVVDAMRGFGNGAVFPAGPLRVPLKTQFSLMDSVLLIGDSDACDYIAFLVNRTGKSLHHAHLESLASDKVAGKSFLAFAGIGNPDKFLKSIKELSGHVVQTYFYPDHYFFTNTDLKNLVQRAKMHNLWLATTAKDYIRIQTSKMQEDLKNLVVFDINVNFVQKNFCRVLLQEVMIRFRERKHSL.

ATP is bound at residue 53-60; the sequence is TCGGAGKT.

Belongs to the LpxK family.

The catalysed reaction is a lipid A disaccharide + ATP = a lipid IVA + ADP + H(+). Its pathway is glycolipid biosynthesis; lipid IV(A) biosynthesis; lipid IV(A) from (3R)-3-hydroxytetradecanoyl-[acyl-carrier-protein] and UDP-N-acetyl-alpha-D-glucosamine: step 6/6. In terms of biological role, transfers the gamma-phosphate of ATP to the 4'-position of a tetraacyldisaccharide 1-phosphate intermediate (termed DS-1-P) to form tetraacyldisaccharide 1,4'-bis-phosphate (lipid IVA). The polypeptide is Tetraacyldisaccharide 4'-kinase (Bartonella henselae (strain ATCC 49882 / DSM 28221 / CCUG 30454 / Houston 1) (Rochalimaea henselae)).